The chain runs to 896 residues: Protein translocase subunit SecA (896 aa).

ATP contacts are provided by residues Gln-87, 105 to 109 (GEGKT), and Asp-512. Positions 867 to 889 (QEPARSNRVAGRNDPCPCGSGKK) are disordered. The Zn(2+) site is built by Cys-882, Cys-884, Cys-893, and Cys-894.

This sequence belongs to the SecA family. As to quaternary structure, monomer and homodimer. Part of the essential Sec protein translocation apparatus which comprises SecA, SecYEG and auxiliary proteins SecDF-YajC and YidC. It depends on Zn(2+) as a cofactor.

It is found in the cell inner membrane. Its subcellular location is the cytoplasm. It carries out the reaction ATP + H2O + cellular proteinSide 1 = ADP + phosphate + cellular proteinSide 2.. Its function is as follows. Part of the Sec protein translocase complex. Interacts with the SecYEG preprotein conducting channel. Has a central role in coupling the hydrolysis of ATP to the transfer of proteins into and across the cell membrane, serving as an ATP-driven molecular motor driving the stepwise translocation of polypeptide chains across the membrane. This chain is Protein translocase subunit SecA, found in Pelobacter propionicus (strain DSM 2379 / NBRC 103807 / OttBd1).